The chain runs to 190 residues: Protein GrpE (190 aa).

Positions 1 to 18 (MTETPNTSSEEIQTSEPS) are enriched in polar residues. The segment at 1-21 (MTETPNTSSEEIQTSEPSPDN) is disordered.

The protein belongs to the GrpE family. Homodimer.

The protein localises to the cytoplasm. Participates actively in the response to hyperosmotic and heat shock by preventing the aggregation of stress-denatured proteins, in association with DnaK and GrpE. It is the nucleotide exchange factor for DnaK and may function as a thermosensor. Unfolded proteins bind initially to DnaJ; upon interaction with the DnaJ-bound protein, DnaK hydrolyzes its bound ATP, resulting in the formation of a stable complex. GrpE releases ADP from DnaK; ATP binding to DnaK triggers the release of the substrate protein, thus completing the reaction cycle. Several rounds of ATP-dependent interactions between DnaJ, DnaK and GrpE are required for fully efficient folding. The chain is Protein GrpE from Chlamydia trachomatis serovar A (strain ATCC VR-571B / DSM 19440 / HAR-13).